Reading from the N-terminus, the 137-residue chain is Small ribosomal subunit protein uS11 (137 aa).

The segment covering 1–11 (MAKQAKAGAAR) has biased composition (low complexity). The segment at 1 to 32 (MAKQAKAGAARRPQRGRRRERKNVPRGQAHVQ) is disordered. Over residues 12 to 21 (RPQRGRRRER) the composition is skewed to basic residues.

It belongs to the universal ribosomal protein uS11 family. In terms of assembly, part of the 30S ribosomal subunit. Interacts with proteins S7 and S18. Binds to IF-3.

Functionally, located on the platform of the 30S subunit, it bridges several disparate RNA helices of the 16S rRNA. Forms part of the Shine-Dalgarno cleft in the 70S ribosome. In Herpetosiphon aurantiacus (strain ATCC 23779 / DSM 785 / 114-95), this protein is Small ribosomal subunit protein uS11.